Reading from the N-terminus, the 187-residue chain is Elongation factor P (187 aa).

It belongs to the elongation factor P family.

It localises to the cytoplasm. Its pathway is protein biosynthesis; polypeptide chain elongation. Its function is as follows. Involved in peptide bond synthesis. Stimulates efficient translation and peptide-bond synthesis on native or reconstituted 70S ribosomes in vitro. Probably functions indirectly by altering the affinity of the ribosome for aminoacyl-tRNA, thus increasing their reactivity as acceptors for peptidyl transferase. The chain is Elongation factor P (efp) from Mycobacterium bovis (strain ATCC BAA-935 / AF2122/97).